A 332-amino-acid polypeptide reads, in one-letter code: Glycerol-3-phosphate dehydrogenase [NAD(P)+] (332 aa).

Residues tryptophan 11, arginine 30, and lysine 108 each contribute to the NADPH site. 3 residues coordinate sn-glycerol 3-phosphate: lysine 108, glycine 137, and serine 139. Alanine 141 is a binding site for NADPH. Lysine 192, aspartate 245, serine 255, arginine 256, and asparagine 257 together coordinate sn-glycerol 3-phosphate. Lysine 192 functions as the Proton acceptor in the catalytic mechanism. Arginine 256 serves as a coordination point for NADPH. NADPH contacts are provided by valine 280 and glutamate 282.

Belongs to the NAD-dependent glycerol-3-phosphate dehydrogenase family.

The protein localises to the cytoplasm. It catalyses the reaction sn-glycerol 3-phosphate + NAD(+) = dihydroxyacetone phosphate + NADH + H(+). The catalysed reaction is sn-glycerol 3-phosphate + NADP(+) = dihydroxyacetone phosphate + NADPH + H(+). Its pathway is membrane lipid metabolism; glycerophospholipid metabolism. Its function is as follows. Catalyzes the reduction of the glycolytic intermediate dihydroxyacetone phosphate (DHAP) to sn-glycerol 3-phosphate (G3P), the key precursor for phospholipid synthesis. The polypeptide is Glycerol-3-phosphate dehydrogenase [NAD(P)+] (Burkholderia orbicola (strain MC0-3)).